The sequence spans 649 residues: Archaeal Lon protease (649 aa).

Residues 1-114 are Cytoplasmic-facing; it reads MFSIKFKTTE…KLDFKAPSST (114 aa). 47 to 54 is a binding site for ATP; the sequence is GDPGVGKS. A helical membrane pass occupies residues 115 to 135; it reads TLLLIMIGAILLSEYLLKYLP. At 136-138 the chain is on the extracellular side; it reads QNY. Residues 139 to 159 traverse the membrane as a helical segment; it reads LLAAVTITALIVLIFGFVIIL. Residues 160 to 649 are Cytoplasmic-facing; that stretch reads TSIMGASRAS…DNRGGAERFN (490 aa). Positions 456–639 constitute a Lon proteolytic domain; the sequence is EPKVGVIYGL…DEIVPLVFDL (184 aa). Residues Ser-550 and Lys-593 contribute to the active site.

This sequence belongs to the peptidase S16 family. Archaeal LonB subfamily. Homohexamer. Organized in a ring with a central cavity.

The protein localises to the cell membrane. ATP-dependent serine protease that mediates the selective degradation of mutant and abnormal proteins as well as certain short-lived regulatory proteins. Degrades polypeptides processively. This is Archaeal Lon protease from Methanocaldococcus jannaschii (strain ATCC 43067 / DSM 2661 / JAL-1 / JCM 10045 / NBRC 100440) (Methanococcus jannaschii).